The following is a 117-amino-acid chain: Cysteine rich necrotrophic effector Tox1 (117 aa).

Residues Met1–Ala17 form the signal peptide. Disulfide bonds link Cys36–Cys87, Cys44–Cys55, Cys53–Cys58, Cys54–Cys98, Cys63–Cys83, Cys67–Cys117, Cys86–Cys97, and Cys107–Cys110. The chitin-binding domain stretch occupies residues Cys87–Cys117.

Interacts with host cell wall-associated kinase receptor Snn1.

It localises to the secreted. Necrotrophic effector that plays a critical role during fungal penetration, via its interaction with the host Snn1 protein. Snn1 is a member of the wall-associated kinase class of receptors, which are known to drive pathways for biotrophic pathogen resistance. Recognition of Tox1 by Snn1 induces mitogen-activated protein kinase genes such as MAPK3 and activates programmed cell death, which allows this necrotroph to gain nutrients and sporulate. Recognition of Tox1 by Snn1 also induces other plant defense responses, including oxidative burst and pathogenesis related (PR) gene expression. The development of necrosis and disease induced by Tox1, and particularly penetration during infection, requires light, which is probably related to the light-dependent expression of host Snn1. Tox1 plays an additional role in providing significant protection from wheat chitinases by binding chitin in the fungal cell wall. The protein is Cysteine rich necrotrophic effector Tox1 of Phaeosphaeria nodorum (strain SN15 / ATCC MYA-4574 / FGSC 10173) (Glume blotch fungus).